A 105-amino-acid chain; its full sequence is Large ribosomal subunit protein uL24 (105 aa).

Belongs to the universal ribosomal protein uL24 family. As to quaternary structure, part of the 50S ribosomal subunit.

In terms of biological role, one of two assembly initiator proteins, it binds directly to the 5'-end of the 23S rRNA, where it nucleates assembly of the 50S subunit. One of the proteins that surrounds the polypeptide exit tunnel on the outside of the subunit. The chain is Large ribosomal subunit protein uL24 from Halorhodospira halophila (strain DSM 244 / SL1) (Ectothiorhodospira halophila (strain DSM 244 / SL1)).